Reading from the N-terminus, the 238-residue chain is Urease subunit alpha (238 aa).

A urease gamma region spans residues 1–102; that stretch reads MKLTPKELDK…LVTVHTPIEA (102 aa). Residues 103–238 are urease beta; sequence NGKLVPGELF…DDNYVKTIKE (136 aa).

The protein in the N-terminal section; belongs to the urease gamma subunit family. This sequence in the C-terminal section; belongs to the urease beta subunit family. As to quaternary structure, heterohexamer of 3 UreA (alpha) and 3 UreB (beta) subunits. Four heterohexamers assemble to form a 16 nm dodecameric complex.

The catalysed reaction is urea + 2 H2O + H(+) = hydrogencarbonate + 2 NH4(+). It functions in the pathway nitrogen metabolism; urea degradation; CO(2) and NH(3) from urea (urease route): step 1/1. The polypeptide is Urease subunit alpha (Helicobacter pylori (strain J99 / ATCC 700824) (Campylobacter pylori J99)).